Reading from the N-terminus, the 146-residue chain is uncharacterized protein (146 aa).

The HTH marR-type domain occupies 1 to 137 (MLSQEFFNSF…TINVMNQIHE (137 aa)).

This is an uncharacterized protein from Staphylococcus aureus (strain N315).